We begin with the raw amino-acid sequence, 241 residues long: Lysoplasmalogenase TMEM86A (241 aa).

Residues 1–13 (MVSPVTVVKSEGP) are Cytoplasmic-facing. Residues 14-30 (KLVPFFKATCVYFVLWL) form a helical membrane-spanning segment. Residues 31–36 (PSSSPS) are Extracellular-facing. Residues 37 to 59 (WVSALIKCLPIFCLWLFLLAHGV) traverse the membrane as a helical segment. Topologically, residues 60-67 (RFLLAHPS) are cytoplasmic. A helical membrane pass occupies residues 68-87 (ASLIFVGLVFSAVGDAFLIW). Topologically, residues 88–96 (QDHGYFEHG) are extracellular. Residues 97 to 113 (LLMFAVAHILYAAAFGM) form a helical membrane-spanning segment. Residues 114-119 (RPLALR) lie on the Cytoplasmic side of the membrane. The helical transmembrane segment at 120–136 (TGLVIGVLSGLCYALLY) threads the bilayer. Topologically, residues 137–142 (PGLSGA) are extracellular. A helical membrane pass occupies residues 143 to 159 (FTYLVGVYVALISFMGW). Residues 160–176 (RAMAGLRLVGAAWRWTE) are Cytoplasmic-facing. Residues 177 to 195 (LAAGGGALLFILSDLTIAL) form a helical membrane-spanning segment. Topologically, residues 196-206 (NKFCFPVPYSR) are extracellular. A helical transmembrane segment spans residues 207 to 225 (ALIMSTYYAAQMLIALSAV). Topologically, residues 226 to 241 (ESREPVGEDYRLSKAD) are cytoplasmic.

It belongs to the TMEM86 family. In terms of tissue distribution, highly expressed in the jejunum, white adipose tissue, kidney and macrophages.

Its subcellular location is the endoplasmic reticulum membrane. The enzyme catalyses a 1-O-(1Z-alkenyl)-sn-glycero-3-phosphocholine + H2O = a 2,3-saturated aldehyde + sn-glycerol 3-phosphocholine. It catalyses the reaction a 1-O-(1Z-alkenyl)-sn-glycero-3-phosphoethanolamine + H2O = a 2,3-saturated aldehyde + sn-glycero-3-phosphoethanolamine. Its function is as follows. Catalyzes the hydrolysis of the vinyl ether bond of choline or ethanolamine lysoplasmalogens, forming fatty aldehyde and glycerophosphocholine or glycerophosphoethanolamine, respectively and is specific for the sn-2-deacylated (lyso) form of plasmalogen. Plays an important role in lysoplasmalogen metabolism in the adipocyte tissue and macrophages. This chain is Lysoplasmalogenase TMEM86A (Tmem86a), found in Mus musculus (Mouse).